Consider the following 313-residue polypeptide: Pantoate--beta-alanine ligase (313 aa).

M36 to H43 is an ATP binding site. The Proton donor role is filled by H43. Q71 is a (R)-pantoate binding site. Q71 is a binding site for beta-alanine. G178–D181 is an ATP binding site. A (R)-pantoate-binding site is contributed by Q184. M215–R218 serves as a coordination point for ATP.

This sequence belongs to the pantothenate synthetase family. Homodimer.

The protein resides in the cytoplasm. It localises to the cytosol. It carries out the reaction (R)-pantoate + beta-alanine + ATP = (R)-pantothenate + AMP + diphosphate + H(+). The protein operates within cofactor biosynthesis; (R)-pantothenate biosynthesis; (R)-pantothenate from (R)-pantoate and beta-alanine: step 1/1. Its function is as follows. Catalyzes the condensation of pantoate with beta-alanine to form pantothenate. Essential for panthotenate biosynthesis. In Oryza sativa subsp. japonica (Rice), this protein is Pantoate--beta-alanine ligase (PANC).